The following is a 236-amino-acid chain: Small ribosomal subunit protein uS2c (236 aa).

The protein belongs to the universal ribosomal protein uS2 family.

Its subcellular location is the plastid. The protein is Small ribosomal subunit protein uS2c (rps2) of Cuscuta obtusiflora (Peruvian dodder).